An 83-amino-acid polypeptide reads, in one-letter code: Hainantoxin-III 7 (83 aa).

A signal peptide spans 1–21 (MKASMFLALAGLVLLFVVGYA). The propeptide occupies 22-48 (SESEEKEFPRELLSKVFAVDDFKGEER). Intrachain disulfides connect Cys-50–Cys-65, Cys-57–Cys-70, and Cys-64–Cys-77. Leucine amide is present on Leu-81.

This sequence belongs to the neurotoxin 10 (Hwtx-1) family. 15 (Hntx-3) subfamily. In terms of assembly, monomer. In terms of tissue distribution, expressed by the venom gland.

It is found in the secreted. Its function is as follows. Selective antagonist of neuronal tetrodotoxin (TTX)-sensitive voltage-gated sodium channels (IC(50)=1270 nM on Nav1.1/SCN1A, 270 nM on Nav1.2/SCN2A, 491 nM on Nav1.3/SCN3A and 232 nM on Nav1.7/SCN9A). This toxin suppress Nav1.7 current amplitude without significantly altering the activation, inactivation, and repriming kinetics. Short extreme depolarizations partially activate the toxin-bound channel, indicating voltage-dependent inhibition of this toxin. This toxin increases the deactivation of the Nav1.7 current after extreme depolarizations. The toxin-Nav1.7 complex is gradually dissociated upon prolonged strong depolarizations in a voltage-dependent manner, and the unbound toxin rebinds to Nav1.7 after a long repolarization. Moreover, analysis of chimeric channels showed that the DIIS3-S4 linker is critical for toxin binding to Nav1.7. These data are consistent with this toxin interacting with Nav1.7 site 4 and trapping the domain II voltage sensor in the closed state. The chain is Hainantoxin-III 7 from Cyriopagopus hainanus (Chinese bird spider).